Consider the following 376-residue polypeptide: Proton extrusion protein PxcA (376 aa).

4 consecutive transmembrane segments (helical) span residues 150–170 (TLIS…VQQM), 251–271 (AVKN…VCII), 299–319 (IILF…QVLL), and 334–354 (FILL…KYWI).

This sequence belongs to the CemA family.

The protein localises to the cell inner membrane. In terms of biological role, required for H(+) efflux immediately after light irradiation to form a rapid H(+) concentration gradient across the thylakoid membranes. Together with PxcL, contributes to transient H(+) uptake following dark to light transition. The protein is Proton extrusion protein PxcA of Prochlorococcus marinus (strain MIT 9303).